Here is a 328-residue protein sequence, read N- to C-terminus: C-type lectin domain family 11 member A (328 aa).

Residues 1-21 (MQAAWLLGALLVPHLLSFGHG) form the signal peptide. The tract at residues 58–111 (PTGVGNKDNLAENSEGKEVWEATETQGEEEEEETTTTPSSSPTPFPSPSPTSED) is disordered. Residues 188–325 (LGHKCFLLSR…CERRLYFVCE (138 aa)) enclose the C-type lectin domain. 2 cysteine pairs are disulfide-bonded: cysteine 209–cysteine 324 and cysteine 301–cysteine 316.

In terms of processing, O-glycosylated. Probably sulfated on the O-glycans.

The protein localises to the cytoplasm. The protein resides in the secreted. Promotes osteogenesis by stimulating the differentiation of mesenchymal progenitors into mature osteoblasts. Important for repair and maintenance of adult bone. This is C-type lectin domain family 11 member A (Clec11a) from Rattus norvegicus (Rat).